We begin with the raw amino-acid sequence, 324 residues long: MKPSIILYKTLPDDLLHRLEAHFTVTQVPNLHPETVAQHAQAFASAQGLLGASETVNRALLEKMPALRAASTISVGYDNVEVDALTARKIVLMHTPAVLTETVADTVMALMLATARRVVDVAERVKAGEWTESIGPAWFGVDVHHKTLGIVGMGRIGMALAQRAHFGFTMPVLYHARRRHQEAEDRFNARYCDLDTLLQEADFVCVILPLTAETRHLFGATQFARMKSSAIFINAGRGPVVDENALIAALQNGEIYAAGLDVFEQEPLSVDSPLLNMSNVVAVPHIGSATHETRYNMMACAVDNLIDALQGKIEKNCVNPQAAG.

Active-site residues include Arg237 and Glu266. His285 acts as the Proton donor in catalysis.

The protein belongs to the D-isomer specific 2-hydroxyacid dehydrogenase family. GhrB subfamily. In terms of assembly, homodimer.

It is found in the cytoplasm. The catalysed reaction is glycolate + NADP(+) = glyoxylate + NADPH + H(+). It catalyses the reaction (R)-glycerate + NAD(+) = 3-hydroxypyruvate + NADH + H(+). The enzyme catalyses (R)-glycerate + NADP(+) = 3-hydroxypyruvate + NADPH + H(+). In terms of biological role, catalyzes the NADPH-dependent reduction of glyoxylate and hydroxypyruvate into glycolate and glycerate, respectively. This chain is Glyoxylate/hydroxypyruvate reductase B, found in Salmonella heidelberg (strain SL476).